Consider the following 387-residue polypeptide: Queuine tRNA-ribosyltransferase (387 aa).

Catalysis depends on Asp-102, which acts as the Proton acceptor. Substrate-binding positions include 102 to 106 (DSGGF), Asp-156, Gln-205, and Gly-232. The tract at residues 263–269 (GVGTPED) is RNA binding. The active-site Nucleophile is Asp-282. An RNA binding; important for wobble base 34 recognition region spans residues 287–291 (TRNAR). Residues Cys-320, Cys-322, Cys-325, and His-351 each coordinate Zn(2+).

The protein belongs to the queuine tRNA-ribosyltransferase family. As to quaternary structure, homodimer. Within each dimer, one monomer is responsible for RNA recognition and catalysis, while the other monomer binds to the replacement base PreQ1. The cofactor is Zn(2+).

It catalyses the reaction 7-aminomethyl-7-carbaguanine + guanosine(34) in tRNA = 7-aminomethyl-7-carbaguanosine(34) in tRNA + guanine. The protein operates within tRNA modification; tRNA-queuosine biosynthesis. In terms of biological role, catalyzes the base-exchange of a guanine (G) residue with the queuine precursor 7-aminomethyl-7-deazaguanine (PreQ1) at position 34 (anticodon wobble position) in tRNAs with GU(N) anticodons (tRNA-Asp, -Asn, -His and -Tyr). Catalysis occurs through a double-displacement mechanism. The nucleophile active site attacks the C1' of nucleotide 34 to detach the guanine base from the RNA, forming a covalent enzyme-RNA intermediate. The proton acceptor active site deprotonates the incoming PreQ1, allowing a nucleophilic attack on the C1' of the ribose to form the product. After dissociation, two additional enzymatic reactions on the tRNA convert PreQ1 to queuine (Q), resulting in the hypermodified nucleoside queuosine (7-(((4,5-cis-dihydroxy-2-cyclopenten-1-yl)amino)methyl)-7-deazaguanosine). The polypeptide is Queuine tRNA-ribosyltransferase (Polaromonas naphthalenivorans (strain CJ2)).